The chain runs to 310 residues: Carbamate kinase (310 aa).

This sequence belongs to the carbamate kinase family. As to quaternary structure, homodimer.

It is found in the cytoplasm. The enzyme catalyses hydrogencarbonate + NH4(+) + ATP = carbamoyl phosphate + ADP + H2O + H(+). It functions in the pathway amino-acid degradation; L-arginine degradation via ADI pathway. The chain is Carbamate kinase from Haemophilus influenzae (strain ATCC 51907 / DSM 11121 / KW20 / Rd).